Reading from the N-terminus, the 347-residue chain is NADH-ubiquinone oxidoreductase chain 2 (347 aa).

A run of 10 helical transmembrane segments spans residues 3-23, 25-45, 60-80, 96-116, 149-169, 178-198, 200-220, 237-257, 274-294, and 323-343; these read PPILLIILLTMISGTMIVLTS, HWLTIWIGLEMNMLAIIPILM, LLTQATASMILMMGITINLMF, AMVTTALAMKLGLAPFHFWVP, IDPNLLLPMAITSILIGGWGG, ILAYSSIAHMGWMTAVTLYNP, MMLLNLTIYIIMTTTTFMLFM, APLITPLILMLMLSLGGLPPL, EMIIIPTIMAITALLNLYFYM, and MILLSPLTVVSTMLLPITPLL.

Belongs to the complex I subunit 2 family. As to quaternary structure, core subunit of respiratory chain NADH dehydrogenase (Complex I) which is composed of 45 different subunits. Interacts with TMEM242.

It is found in the mitochondrion inner membrane. The enzyme catalyses a ubiquinone + NADH + 5 H(+)(in) = a ubiquinol + NAD(+) + 4 H(+)(out). Functionally, core subunit of the mitochondrial membrane respiratory chain NADH dehydrogenase (Complex I) which catalyzes electron transfer from NADH through the respiratory chain, using ubiquinone as an electron acceptor. Essential for the catalytic activity and assembly of complex I. The protein is NADH-ubiquinone oxidoreductase chain 2 of Mungos mungo (Banded mongoose).